Reading from the N-terminus, the 449-residue chain is NADP-specific glutamate dehydrogenase (449 aa).

Residue Lys-125 is part of the active site.

It belongs to the Glu/Leu/Phe/Val dehydrogenases family. As to quaternary structure, homohexamer.

The catalysed reaction is L-glutamate + NADP(+) + H2O = 2-oxoglutarate + NH4(+) + NADPH + H(+). The sequence is that of NADP-specific glutamate dehydrogenase from Giardia intestinalis (Giardia lamblia).